A 157-amino-acid polypeptide reads, in one-letter code: Small ribosomal subunit protein bS6 (157 aa).

Over residues 96 to 151 the composition is skewed to basic and acidic residues; it reads HEEGPSAMMRKADRDRDRDERGGGGFRGDREGGFRGDREGGGFRGDRGPRRPRDDA. The segment at 96 to 157 is disordered; sequence HEEGPSAMMR…RDDAPAATEE (62 aa).

Belongs to the bacterial ribosomal protein bS6 family.

Its function is as follows. Binds together with bS18 to 16S ribosomal RNA. The protein is Small ribosomal subunit protein bS6 of Rhodopseudomonas palustris (strain BisA53).